The sequence spans 349 residues: Deoxyguanosinetriphosphate triphosphohydrolase-like protein (349 aa).

Residues 80–197 enclose the HD domain; sequence RLTHTLEVAQ…VKYSDKIAYV (118 aa).

The protein belongs to the dGTPase family. Type 2 subfamily.

This chain is Deoxyguanosinetriphosphate triphosphohydrolase-like protein, found in Clostridium tetani (strain Massachusetts / E88).